The sequence spans 280 residues: S-methyl-5'-thioadenosine phosphorylase (280 aa).

Residues S18, 60–61 (RH), and 93–94 (TA) contribute to the phosphate site. M196 is a substrate binding site. T197 serves as a coordination point for phosphate. 220-222 (DYD) provides a ligand contact to substrate.

This sequence belongs to the PNP/MTAP phosphorylase family. MTAP subfamily. As to quaternary structure, homotrimer.

The protein localises to the cytoplasm. It localises to the nucleus. It catalyses the reaction S-methyl-5'-thioadenosine + phosphate = 5-(methylsulfanyl)-alpha-D-ribose 1-phosphate + adenine. Its pathway is amino-acid biosynthesis; L-methionine biosynthesis via salvage pathway; S-methyl-5-thio-alpha-D-ribose 1-phosphate from S-methyl-5'-thioadenosine (phosphorylase route): step 1/1. In terms of biological role, catalyzes the reversible phosphorylation of S-methyl-5'-thioadenosine (MTA) to adenine and 5-methylthioribose-1-phosphate. Involved in the breakdown of MTA, a major by-product of polyamine biosynthesis. Responsible for the first step in the methionine salvage pathway after MTA has been generated from S-adenosylmethionine. Has broad substrate specificity with 6-aminopurine nucleosides as preferred substrates. This chain is S-methyl-5'-thioadenosine phosphorylase, found in Ciona intestinalis (Transparent sea squirt).